We begin with the raw amino-acid sequence, 147 residues long: 3-dehydroquinate dehydratase (147 aa).

Y23 acts as the Proton acceptor in catalysis. Substrate is bound by residues N74, H80, and D87. Catalysis depends on H100, which acts as the Proton donor. Residues 101-102 and R111 contribute to the substrate site; that span reads LS.

This sequence belongs to the type-II 3-dehydroquinase family. As to quaternary structure, homododecamer.

The enzyme catalyses 3-dehydroquinate = 3-dehydroshikimate + H2O. It participates in metabolic intermediate biosynthesis; chorismate biosynthesis; chorismate from D-erythrose 4-phosphate and phosphoenolpyruvate: step 3/7. Catalyzes a trans-dehydration via an enolate intermediate. This chain is 3-dehydroquinate dehydratase, found in Clostridium botulinum (strain Loch Maree / Type A3).